Here is a 147-residue protein sequence, read N- to C-terminus: Large ribosomal subunit protein uL15 (147 aa).

Positions 1 to 59 are disordered; the sequence is MKLYELKPAPGSKKNRKRVGRGESSGHGKTSTRGHKGQWARSGGGVRPGFEGGQMPLTR. Positions 42 to 52 are enriched in gly residues; that stretch reads SGGGVRPGFEG.

It belongs to the universal ribosomal protein uL15 family. As to quaternary structure, part of the 50S ribosomal subunit.

In terms of biological role, binds to the 23S rRNA. This is Large ribosomal subunit protein uL15 from Caldicellulosiruptor bescii (strain ATCC BAA-1888 / DSM 6725 / KCTC 15123 / Z-1320) (Anaerocellum thermophilum).